A 269-amino-acid polypeptide reads, in one-letter code: Regulatory protein RecX (269 aa).

The protein belongs to the RecX family.

It is found in the cytoplasm. Functionally, modulates RecA activity. The sequence is that of Regulatory protein RecX from Listeria welshimeri serovar 6b (strain ATCC 35897 / DSM 20650 / CCUG 15529 / CIP 8149 / NCTC 11857 / SLCC 5334 / V8).